We begin with the raw amino-acid sequence, 309 residues long: MEKILIFGHQNPDTDTICSAIAYADLKNKLGFNAEPVRLGQVNGETQYALDYFKQESPRLVETAANEVNGVILVDHNERQQSIKDIEEVQVLEVIDHHRIANFETAEPLYYRAEPVGCTATILNKMYKENNVKIEKEIAGLMLSAIISDSLLFKSPTCTDQDVAAAKELAEIAGVDAEEYGLNMLKAGADLSKKTVEELISLDAKEFTLGSKKVEIAQVNTVDIEDVKKRQAELEAVISKVVAEKNLDLFLLVITDILENDSLALAIGNEAAKVEKAFNVTLENNTALLKGVVSRKKQVVPVLTDAMAE.

Mn(2+) contacts are provided by histidine 9, aspartate 13, aspartate 15, aspartate 75, histidine 97, and aspartate 149.

As to quaternary structure, homodimer. Mn(2+) serves as cofactor.

The protein resides in the cytoplasm. The catalysed reaction is diphosphate + H2O = 2 phosphate + H(+). The polypeptide is Manganese-dependent inorganic pyrophosphatase (ppaC) (Bacillus subtilis (strain 168)).